A 633-amino-acid chain; its full sequence is Dynein axonemal assembly factor 1 (633 aa).

Residues M1–P80 form a disordered region. Positions A22–E42 are enriched in basic and acidic residues. The span at G46–G60 shows a compositional bias: low complexity. Residues H70–P80 show a composition bias toward basic and acidic residues. 6 LRR repeats span residues A101–T123, G124–S145, E146–Q167, K168–P189, V190–R211, and Q215–E236. One can recognise an LRRCT domain in the interval N249–W288. Positions E326 to K344 are enriched in basic and acidic residues. Disordered stretches follow at residues E326–K364 and L404–D436. S349 bears the Phosphoserine mark. Basic and acidic residues predominate over residues A352–K364. Residues T413–E427 show a composition bias toward low complexity. T462 carries the post-translational modification Phosphothreonine. Phosphoserine occurs at positions 465 and 488. Composition is skewed to polar residues over residues T538 to P555 and G568 to G592. Positions T538–D633 are disordered.

This sequence belongs to the DNAAF1 family.

It localises to the cell projection. The protein resides in the cilium. In terms of biological role, cilium-specific protein required for the stability of the ciliary architecture. Plays a role in cytoplasmic preassembly of dynein arms. Involved in regulation of microtubule-based cilia and actin-based brush border microvilli. The polypeptide is Dynein axonemal assembly factor 1 (Dnaaf1) (Rattus norvegicus (Rat)).